Reading from the N-terminus, the 155-residue chain is NADPH-dependent 7-cyano-7-deazaguanine reductase (155 aa).

Cysteine 53 (thioimide intermediate) is an active-site residue. Aspartate 60 (proton donor) is an active-site residue. Substrate-binding positions include 75–77 (VES) and 94–95 (HE).

This sequence belongs to the GTP cyclohydrolase I family. QueF type 1 subfamily.

It is found in the cytoplasm. It carries out the reaction 7-aminomethyl-7-carbaguanine + 2 NADP(+) = 7-cyano-7-deazaguanine + 2 NADPH + 3 H(+). It functions in the pathway tRNA modification; tRNA-queuosine biosynthesis. Catalyzes the NADPH-dependent reduction of 7-cyano-7-deazaguanine (preQ0) to 7-aminomethyl-7-deazaguanine (preQ1). This chain is NADPH-dependent 7-cyano-7-deazaguanine reductase, found in Brucella anthropi (strain ATCC 49188 / DSM 6882 / CCUG 24695 / JCM 21032 / LMG 3331 / NBRC 15819 / NCTC 12168 / Alc 37) (Ochrobactrum anthropi).